The sequence spans 320 residues: UDP-N-acetylenolpyruvoylglucosamine reductase (320 aa).

In terms of domain architecture, FAD-binding PCMH-type spans 35 to 216 (RAGGPAQVLF…KQAMDEVQHH (182 aa)). Arg181 is an active-site residue. Ser230 acts as the Proton donor in catalysis. Glu300 is a catalytic residue.

The protein belongs to the MurB family. Requires FAD as cofactor.

The protein localises to the cytoplasm. It catalyses the reaction UDP-N-acetyl-alpha-D-muramate + NADP(+) = UDP-N-acetyl-3-O-(1-carboxyvinyl)-alpha-D-glucosamine + NADPH + H(+). Its pathway is cell wall biogenesis; peptidoglycan biosynthesis. Functionally, cell wall formation. The chain is UDP-N-acetylenolpyruvoylglucosamine reductase from Brucella anthropi (strain ATCC 49188 / DSM 6882 / CCUG 24695 / JCM 21032 / LMG 3331 / NBRC 15819 / NCTC 12168 / Alc 37) (Ochrobactrum anthropi).